Consider the following 372-residue polypeptide: Fatty acid 2-hydroxylase (372 aa).

The Cytochrome b5 heme-binding domain maps to 8–86; that stretch reads AASFTSAEVQ…LEQYYVGELR (79 aa). Heme contacts are provided by H43 and H69. Transmembrane regions (helical) follow at residues 168 to 188 and 213 to 233; these read VWYS…WSYY and SVFI…EYLI. Residues 219-361 form the Fatty acid hydroxylase domain; the sequence is FVLGMLIWTL…TKLWDYFFHT (143 aa). Residues H234, H239, H257, H260, and H261 each coordinate Zn(2+). A run of 2 helical transmembrane segments spans residues 268–288 and 290–310; these read SRLV…YVFL and LILP…GYVL. Zn(2+) is bound by residues H315, H319, H336, H339, and H340.

This sequence belongs to the sterol desaturase family. SCS7 subfamily. Requires Zn(2+) as cofactor. In terms of tissue distribution, detected in oligodendrocytes (at protein level). Detected in sciatic nerve.

It localises to the endoplasmic reticulum membrane. The protein resides in the microsome membrane. The enzyme catalyses a 1,2-saturated fatty acid + 2 Fe(II)-[cytochrome b5] + O2 + 2 H(+) = a (R)-2-hydroxy fatty acid + 2 Fe(III)-[cytochrome b5] + H2O. It catalyses the reaction hexadecanoate + 2 Fe(II)-[cytochrome b5] + O2 + 2 H(+) = (R)-2-hydroxyhexadecanoate + 2 Fe(III)-[cytochrome b5] + H2O. The catalysed reaction is octadecanoate + 2 Fe(II)-[cytochrome b5] + O2 + 2 H(+) = (R)-2-hydroxyoctadecanoate + 2 Fe(III)-[cytochrome b5] + H2O. It carries out the reaction docosanoate + 2 Fe(II)-[cytochrome b5] + O2 + 2 H(+) = 2-hydroxydocosanoate + 2 Fe(III)-[cytochrome b5] + H2O. The enzyme catalyses tetracosanoate + 2 Fe(II)-[cytochrome b5] + O2 + 2 H(+) = (R)-2-hydroxytetracosanoate + 2 Fe(III)-[cytochrome b5] + H2O. It participates in lipid metabolism; fatty acid metabolism. Its pathway is sphingolipid metabolism; galactosylceramide biosynthesis. In terms of biological role, catalyzes the hydroxylation of free fatty acids at the C-2 position to produce 2-hydroxy fatty acids, which are building blocks of sphingolipids and glycosphingolipids common in neural tissue and epidermis. FA2H is stereospecific for the production of (R)-2-hydroxy fatty acids. Plays an essential role in the synthesis of galactosphingolipids of the myelin sheath. Responsible for the synthesis of sphingolipids and glycosphingolipids involved in the formation of epidermal lamellar bodies critical for skin permeability barrier. Participates in the synthesis of glycosphingolipids and a fraction of type II wax diesters in sebaceous gland, specifically regulating hair follicle homeostasis. Involved in the synthesis of sphingolipids of plasma membrane rafts, controlling lipid raft mobility and trafficking of raft-associated proteins. The protein is Fatty acid 2-hydroxylase of Rattus norvegicus (Rat).